The primary structure comprises 238 residues: Ribonuclease PH (238 aa).

Residues Arg86 and Gly124–Arg126 contribute to the phosphate site.

Belongs to the RNase PH family. In terms of assembly, homodimer. Has a tendency to aggregate into multimers. Requires Mg(2+) as cofactor.

The enzyme catalyses tRNA(n+1) + phosphate = tRNA(n) + a ribonucleoside 5'-diphosphate. Phosphorolytic exoribonuclease that plays an important role in tRNA 3'-end maturation; has no activity on a tRNA precursor with a 3'-terminal phosphate group. In vitro is freely reversible, adds nucleotides to the ends of RNA molecules by using nucleoside diphosphates as substrates, but this may not be physiologically important. Probably plays a role in initiation of 16S rRNA degradation (leading to ribosome degradation) during starvation. This Escherichia coli (strain K12 / MC4100 / BW2952) protein is Ribonuclease PH.